We begin with the raw amino-acid sequence, 163 residues long: 3-isopropylmalate dehydratase small subunit (163 aa).

It belongs to the LeuD family. LeuD type 2 subfamily. Heterodimer of LeuC and LeuD.

It catalyses the reaction (2R,3S)-3-isopropylmalate = (2S)-2-isopropylmalate. It participates in amino-acid biosynthesis; L-leucine biosynthesis; L-leucine from 3-methyl-2-oxobutanoate: step 2/4. Catalyzes the isomerization between 2-isopropylmalate and 3-isopropylmalate, via the formation of 2-isopropylmaleate. The protein is 3-isopropylmalate dehydratase small subunit (leuD) of Clostridium acetobutylicum (strain ATCC 824 / DSM 792 / JCM 1419 / IAM 19013 / LMG 5710 / NBRC 13948 / NRRL B-527 / VKM B-1787 / 2291 / W).